Reading from the N-terminus, the 409-residue chain is Peptidase T (409 aa).

Zn(2+) is bound at residue His78. Asp80 is a catalytic residue. Asp140 is a Zn(2+) binding site. The active-site Proton acceptor is Glu173. The Zn(2+) site is built by Glu174, Asp196, and His379.

Belongs to the peptidase M20B family. Requires Zn(2+) as cofactor.

Its subcellular location is the cytoplasm. It carries out the reaction Release of the N-terminal residue from a tripeptide.. In terms of biological role, cleaves the N-terminal amino acid of tripeptides. The sequence is that of Peptidase T from Escherichia coli (strain SE11).